Here is a 37-residue protein sequence, read N- to C-terminus: Small ribosomal subunit protein eS32 (37 aa).

The protein belongs to the eukaryotic ribosomal protein eS32 family. Part of the small ribosomal subunit.

This chain is Small ribosomal subunit protein eS32, found in Pyrococcus furiosus (strain ATCC 43587 / DSM 3638 / JCM 8422 / Vc1).